Here is a 339-residue protein sequence, read N- to C-terminus: Dihydroorotate dehydrogenase (quinone) (339 aa).

FMN is bound by residues 62-66 and threonine 86; that span reads AGMDK. Residue lysine 66 coordinates substrate. 111–115 contributes to the substrate binding site; it reads NRMGF. Residues asparagine 139 and asparagine 172 each coordinate FMN. Residue asparagine 172 participates in substrate binding. Serine 175 acts as the Nucleophile in catalysis. Substrate is bound at residue asparagine 177. 2 residues coordinate FMN: lysine 217 and threonine 245. Position 246–247 (246–247) interacts with substrate; that stretch reads NT. Residues glycine 268, glycine 297, and 318–319 contribute to the FMN site; that span reads YS.

This sequence belongs to the dihydroorotate dehydrogenase family. Type 2 subfamily. Monomer. FMN is required as a cofactor.

The protein localises to the cell membrane. It catalyses the reaction (S)-dihydroorotate + a quinone = orotate + a quinol. Its pathway is pyrimidine metabolism; UMP biosynthesis via de novo pathway; orotate from (S)-dihydroorotate (quinone route): step 1/1. In terms of biological role, catalyzes the conversion of dihydroorotate to orotate with quinone as electron acceptor. In Shewanella piezotolerans (strain WP3 / JCM 13877), this protein is Dihydroorotate dehydrogenase (quinone).